A 433-amino-acid chain; its full sequence is 26S proteasome regulatory subunit 7 (433 aa).

The interval 1-22 (MPDYLGADQRKTKEDEKDDKPI) is disordered. The span at 8–22 (DQRKTKEDEKDDKPI) shows a compositional bias: basic and acidic residues. Lys116 is subject to N6-acetyllysine. 216–223 (GPPGTGKT) contacts ATP. Lys422 carries the N6-acetyllysine modification.

Belongs to the AAA ATPase family. As to quaternary structure, component of the 19S proteasome regulatory particle complex. The 26S proteasome consists of a 20S core particle (CP) and two 19S regulatory subunits (RP). The regulatory particle is made of a lid composed of 9 subunits, a base containing 6 ATPases including PSMC2 and few additional components. Interacts with NDC80/HEC; this interaction is detected only during M phase. Interacts and SQSTM1. Interacts with PAAF1. Directly interacts with TRIM5. Post-translationally, monoubiquitinated by RNF181. Phosphorylated. Dephosphorylated by UBLCP1 which impairs PSMC2 ATPase activity and disrupts 26S proteasome assembly.

It is found in the cytoplasm. The protein resides in the nucleus. Component of the 26S proteasome, a multiprotein complex involved in the ATP-dependent degradation of ubiquitinated proteins. This complex plays a key role in the maintenance of protein homeostasis by removing misfolded or damaged proteins, which could impair cellular functions, and by removing proteins whose functions are no longer required. Therefore, the proteasome participates in numerous cellular processes, including cell cycle progression, apoptosis, or DNA damage repair. PSMC2 belongs to the heterohexameric ring of AAA (ATPases associated with diverse cellular activities) proteins that unfolds ubiquitinated target proteins that are concurrently translocated into a proteolytic chamber and degraded into peptides. The chain is 26S proteasome regulatory subunit 7 (PSMC2) from Pongo abelii (Sumatran orangutan).